Consider the following 396-residue polypeptide: Phosphoglycerate kinase (396 aa).

Substrate is bound by residues 21–23 (DFN), Arg-36, 59–62 (HLGK), Arg-119, and Arg-156. ATP is bound by residues Lys-206, Gly-294, Glu-325, and 352–355 (GGDS).

The protein belongs to the phosphoglycerate kinase family. As to quaternary structure, monomer.

It localises to the cytoplasm. The enzyme catalyses (2R)-3-phosphoglycerate + ATP = (2R)-3-phospho-glyceroyl phosphate + ADP. Its pathway is carbohydrate degradation; glycolysis; pyruvate from D-glyceraldehyde 3-phosphate: step 2/5. This Listeria innocua serovar 6a (strain ATCC BAA-680 / CLIP 11262) protein is Phosphoglycerate kinase.